The chain runs to 743 residues: Catalase-peroxidase (743 aa).

Polar residues predominate over residues 1–15; the sequence is MSSDSRPPQPDTSTQ. Residues 1-40 form a disordered region; it reads MSSDSRPPQPDTSTQSNSESESPAISSPTPQDHAPMTNRD. Over residues 16-28 the composition is skewed to low complexity; the sequence is SNSESESPAISSP. Positions 110 to 233 form a cross-link, tryptophyl-tyrosyl-methioninium (Trp-Tyr) (with M-259); sequence WHAAGTYRIQ…YGATTMGLIY (124 aa). Histidine 111 functions as the Proton acceptor in the catalytic mechanism. Residues 233–259 constitute a cross-link (tryptophyl-tyrosyl-methioninium (Tyr-Met) (with W-110)); it reads YVNPEGPEGKPDPVAAAHDIRETFARM. A heme b-binding site is contributed by histidine 274. Residues 490–511 form a disordered region; the sequence is DKRGGANGGRLRLEPQKSWESN.

This sequence belongs to the peroxidase family. Peroxidase/catalase subfamily. As to quaternary structure, homodimer or homotetramer. Heme b is required as a cofactor. In terms of processing, formation of the three residue Trp-Tyr-Met cross-link is important for the catalase, but not the peroxidase activity of the enzyme.

The enzyme catalyses H2O2 + AH2 = A + 2 H2O. It catalyses the reaction 2 H2O2 = O2 + 2 H2O. In terms of biological role, bifunctional enzyme with both catalase and broad-spectrum peroxidase activity. The sequence is that of Catalase-peroxidase from Mycobacterium marinum (strain ATCC BAA-535 / M).